The primary structure comprises 521 residues: MLQVVLGAPQRLLKEGRQSRKLVLVVVFVALLLDNMLLTVVVPIVPTFLYATEFKDSNSSLHRGPSVSSQQALTSPAFSTIFSFFDNTTTTVEEHVPFRVTWTNGTIPPPVTEASSVPKNNCLQGIEFLEEENVRIGILFASKALMQLLVNPFVGPLTNRIGYHIPMFVGFMIMFLSTLMFAFSGTYALLFVARTLQGIGSSFSSVAGLGMLASVYTDNYERGRAMGIALGGLALGLLVGAPFGSVMYEFVGKSSPFLILAFLALLDGALQLCILWPSKVSPESAMGTSLLTLLKDPYILVAAGSICLANMGVAILEPTLPIWMMQTMCSPEWQLGLAFLPASVAYLIGTNLFGVLANKMGRWLCSLVGMVAVGISLLCVPLAHNIFGLIGPNAGLGFAIGMVDSSLMPIMGYLVDLRHTSVYGSVYAIADVAFCVGFAIGPSTGGVIVQVIGFPWLMVIIGTINIIYAPLCCFLQNPPAKEEKRAILSQECPTETQMYTFQKPTKAFPLGENSDDPSSGE.

Topologically, residues 1–21 are cytoplasmic; that stretch reads MLQVVLGAPQRLLKEGRQSRK. Residues 22–42 form a helical membrane-spanning segment; sequence LVLVVVFVALLLDNMLLTVVV. Residues 43–135 are Lumenal, vesicle-facing; it reads PIVPTFLYAT…IEFLEEENVR (93 aa). 3 N-linked (GlcNAc...) asparagine glycosylation sites follow: asparagine 58, asparagine 87, and asparagine 104. A helical transmembrane segment spans residues 136 to 155; the sequence is IGILFASKALMQLLVNPFVG. Residues 156–164 lie on the Cytoplasmic side of the membrane; sequence PLTNRIGYH. Residues 165-185 form a helical membrane-spanning segment; that stretch reads IPMFVGFMIMFLSTLMFAFSG. The Lumenal, vesicle portion of the chain corresponds to 186 to 194; the sequence is TYALLFVAR. The helical transmembrane segment at 195 to 215 threads the bilayer; sequence TLQGIGSSFSSVAGLGMLASV. The Cytoplasmic segment spans residues 216 to 224; the sequence is YTDNYERGR. A helical membrane pass occupies residues 225–247; sequence AMGIALGGLALGLLVGAPFGSVM. The Lumenal, vesicle portion of the chain corresponds to 248–253; the sequence is YEFVGK. The chain crosses the membrane as a helical span at residues 254–276; that stretch reads SSPFLILAFLALLDGALQLCILW. Residues 277–296 are Cytoplasmic-facing; it reads PSKVSPESAMGTSLLTLLKD. Residues 297–316 traverse the membrane as a helical segment; the sequence is PYILVAAGSICLANMGVAIL. Over 317–332 the chain is Lumenal, vesicle; the sequence is EPTLPIWMMQTMCSPE. A helical transmembrane segment spans residues 333-357; that stretch reads WQLGLAFLPASVAYLIGTNLFGVLA. The Cytoplasmic portion of the chain corresponds to 358-362; sequence NKMGR. The chain crosses the membrane as a helical span at residues 363–383; that stretch reads WLCSLVGMVAVGISLLCVPLA. Residues 384 to 394 lie on the Lumenal, vesicle side of the membrane; the sequence is HNIFGLIGPNA. A helical membrane pass occupies residues 395–415; that stretch reads GLGFAIGMVDSSLMPIMGYLV. The Cytoplasmic segment spans residues 416 to 419; sequence DLRH. A helical transmembrane segment spans residues 420 to 440; that stretch reads TSVYGSVYAIADVAFCVGFAI. Topologically, residues 441–445 are lumenal, vesicle; it reads GPSTG. A helical transmembrane segment spans residues 446–467; that stretch reads GVIVQVIGFPWLMVIIGTINII. Over 468–521 the chain is Cytoplasmic; that stretch reads YAPLCCFLQNPPAKEEKRAILSQECPTETQMYTFQKPTKAFPLGENSDDPSSGE.

This sequence belongs to the major facilitator superfamily. Vesicular transporter family. As to expression, adrenal gland.

It is found in the cytoplasmic vesicle. The protein resides in the secretory vesicle membrane. Its subcellular location is the secretory vesicle. The protein localises to the synaptic vesicle membrane. The enzyme catalyses serotonin(in) + 2 H(+)(out) = serotonin(out) + 2 H(+)(in). It carries out the reaction (R)-noradrenaline(in) + 2 H(+)(out) = (R)-noradrenaline(out) + 2 H(+)(in). It catalyses the reaction dopamine(in) + 2 H(+)(out) = dopamine(out) + 2 H(+)(in). With respect to regulation, strongly inhibited by reserpine, ketanserin and methamphetamine. Also inhibited weakly by tetrabenazine. Electrogenic antiporter that exchanges one cationic monoamine with two intravesicular protons across the membrane of secretory and synaptic vesicles. Uses the electrochemical proton gradient established by the V-type proton-pump ATPase to accumulate high concentrations of monoamines inside the vesicles prior to their release via exocytosis. Transports catecholamines and indolamines with higher affinity for serotonin. Regulates the transvesicular monoaminergic gradient that determines the quantal size. Mediates presynaptic monoaminergic vesicle transport in the amygdala and prefrontal brain regions related with emotion processing in response to environmental stimuli. The polypeptide is Chromaffin granule amine transporter (Slc18a1) (Rattus norvegicus (Rat)).